We begin with the raw amino-acid sequence, 388 residues long: Pepsin A-1 (388 aa).

Positions 1 to 15 (MKWLLLLGLVALSEC) are cleaved as a signal peptide. 2 propeptides (activation peptide) span residues 16-40 (IIYK…LLKD) and 41-62 (FLKK…APTL). The Peptidase A1 domain maps to 76-385 (YFGTIGIGTP…DRANNQVGLA (310 aa)). Asp94 is a catalytic residue. A disulfide bridge connects residues Cys107 and Cys112. At Ser130 the chain carries Phosphoserine. Residues Cys268 and Cys272 are joined by a disulfide bond. Asp277 is a catalytic residue. Residues Cys311 and Cys344 are joined by a disulfide bond.

The protein belongs to the peptidase A1 family. Each pepsinogen is converted to corresponding pepsin at pH 2.0 in part as a result of the release of a 47 AA activation segment and in part as a result of stepwise proteolytic cleavage via an intermediate form(s).

The protein localises to the secreted. It carries out the reaction Preferential cleavage: hydrophobic, preferably aromatic, residues in P1 and P1' positions. Cleaves 1-Phe-|-Val-2, 4-Gln-|-His-5, 13-Glu-|-Ala-14, 14-Ala-|-Leu-15, 15-Leu-|-Tyr-16, 16-Tyr-|-Leu-17, 23-Gly-|-Phe-24, 24-Phe-|-Phe-25 and 25-Phe-|-Tyr-26 bonds in the B chain of insulin.. Its function is as follows. Shows particularly broad specificity; although bonds involving phenylalanine and leucine are preferred, many others are also cleaved to some extent. The chain is Pepsin A-1 (PGA) from Macaca fuscata fuscata (Japanese macaque).